Here is a 117-residue protein sequence, read N- to C-terminus: Glutamine-rich protein (117 aa).

Over residues 27 to 72 (RQQFQQQQQQQRQPQLQQQQQQQGIQQQPQGLQHQQQQFGLTQQHG) the composition is skewed to low complexity. Residues 27 to 88 (RQQFQQQQQQ…IVQPNPASQN (62 aa)) form a disordered region. Polar residues predominate over residues 75-87 (RRQNIVQPNPASQ).

In terms of tissue distribution, component of the acid-soluble and acid-insoluble organic matrix of calcified shell layers (at protein level).

Its subcellular location is the secreted. In Haliotis asinina (Donkey's ear abalone), this protein is Glutamine-rich protein.